A 457-amino-acid polypeptide reads, in one-letter code: UPF0328 protein ECU05_0030 (457 aa).

Disordered regions lie at residues 1 to 112 (MPRP…PTAT) and 157 to 183 (VKSQ…NPRI). The segment covering 74-94 (HTEGCHTHEANPEPNTKHTET) has biased composition (basic and acidic residues). Residues 102-112 (CPPPHPGPTAT) are compositionally biased toward pro residues.

The protein belongs to the UPF0328 family.

This Encephalitozoon cuniculi (strain GB-M1) (Microsporidian parasite) protein is UPF0328 protein ECU05_0030.